Here is a 181-residue protein sequence, read N- to C-terminus: Large ribosomal subunit protein uL5 (181 aa).

It belongs to the universal ribosomal protein uL5 family. Part of the 50S ribosomal subunit; part of the 5S rRNA/L5/L18/L25 subcomplex. Contacts the 5S rRNA and the P site tRNA. Forms a bridge to the 30S subunit in the 70S ribosome.

Its function is as follows. This is one of the proteins that bind and probably mediate the attachment of the 5S RNA into the large ribosomal subunit, where it forms part of the central protuberance. In the 70S ribosome it contacts protein S13 of the 30S subunit (bridge B1b), connecting the 2 subunits; this bridge is implicated in subunit movement. Contacts the P site tRNA; the 5S rRNA and some of its associated proteins might help stabilize positioning of ribosome-bound tRNAs. This Onion yellows phytoplasma (strain OY-M) protein is Large ribosomal subunit protein uL5.